Consider the following 283-residue polypeptide: Pantothenate synthetase (283 aa).

M30–H37 serves as a coordination point for ATP. Residue H37 is the Proton donor of the active site. Q61 provides a ligand contact to (R)-pantoate. A beta-alanine-binding site is contributed by Q61. G147–D150 provides a ligand contact to ATP. Q153 contacts (R)-pantoate. ATP-binding positions include V176 and M184–R187.

The protein belongs to the pantothenate synthetase family. In terms of assembly, homodimer.

Its subcellular location is the cytoplasm. It carries out the reaction (R)-pantoate + beta-alanine + ATP = (R)-pantothenate + AMP + diphosphate + H(+). It functions in the pathway cofactor biosynthesis; (R)-pantothenate biosynthesis; (R)-pantothenate from (R)-pantoate and beta-alanine: step 1/1. Catalyzes the condensation of pantoate with beta-alanine in an ATP-dependent reaction via a pantoyl-adenylate intermediate. The polypeptide is Pantothenate synthetase (Desulforapulum autotrophicum (strain ATCC 43914 / DSM 3382 / VKM B-1955 / HRM2) (Desulfobacterium autotrophicum)).